The sequence spans 242 residues: RNA polymerase sigma factor for flagellar operon (242 aa).

The Polymerase core binding motif lies at 55–68 (DMQQIGLIALVEAG). The segment at residues 211 to 230 (LHEIALVLDLTPPRICQLHK) is a DNA-binding region (H-T-H motif).

The protein belongs to the sigma-70 factor family.

Sigma factors are initiation factors that promote the attachment of RNA polymerase to specific initiation sites and are then released. This alternative sigma factor is specific for the flagellin gene (fliC) expression. The protein is RNA polymerase sigma factor for flagellar operon (lafS) of Vibrio parahaemolyticus serotype O3:K6 (strain RIMD 2210633).